The primary structure comprises 175 residues: MLTSGIIVLSGGLLDPNPGLIFWTTVTFLIVLFILKKFTWGPMLSALEEREKGIKNSIDRAQSAKEEAEAVLNKNRQLLAQAGADADKIIREGKEYGDKLKAEITEKAHLEASRMISSAKDEIDQEKRRALTELRTEVADLAVKGAEKIIMANLDAEKQKNIVDSMIQELSQHRN.

The chain crosses the membrane as a helical span at residues 19 to 35 (GLIFWTTVTFLIVLFIL).

It belongs to the ATPase B chain family. F-type ATPases have 2 components, F(1) - the catalytic core - and F(0) - the membrane proton channel. F(1) has five subunits: alpha(3), beta(3), gamma(1), delta(1), epsilon(1). F(0) has four main subunits: a(1), b(2) and c(10-14). The alpha and beta chains form an alternating ring which encloses part of the gamma chain. F(1) is attached to F(0) by a central stalk formed by the gamma and epsilon chains, while a peripheral stalk is formed by the delta and b chains.

The protein resides in the cell inner membrane. F(1)F(0) ATP synthase produces ATP from ADP in the presence of a proton or sodium gradient. F-type ATPases consist of two structural domains, F(1) containing the extramembraneous catalytic core and F(0) containing the membrane proton channel, linked together by a central stalk and a peripheral stalk. During catalysis, ATP synthesis in the catalytic domain of F(1) is coupled via a rotary mechanism of the central stalk subunits to proton translocation. Functionally, component of the F(0) channel, it forms part of the peripheral stalk, linking F(1) to F(0). In Chlorobium phaeobacteroides (strain BS1), this protein is ATP synthase subunit b.